The sequence spans 297 residues: Lipoyl synthase (297 aa).

[4Fe-4S] cluster contacts are provided by Cys37, Cys42, Cys48, Cys63, Cys67, Cys70, and Ser276. The Radical SAM core domain occupies 49–265 (WSRKHATVMI…ERIAKTKGFL (217 aa)).

The protein belongs to the radical SAM superfamily. Lipoyl synthase family. The cofactor is [4Fe-4S] cluster.

It is found in the cytoplasm. It carries out the reaction [[Fe-S] cluster scaffold protein carrying a second [4Fe-4S](2+) cluster] + N(6)-octanoyl-L-lysyl-[protein] + 2 oxidized [2Fe-2S]-[ferredoxin] + 2 S-adenosyl-L-methionine + 4 H(+) = [[Fe-S] cluster scaffold protein] + N(6)-[(R)-dihydrolipoyl]-L-lysyl-[protein] + 4 Fe(3+) + 2 hydrogen sulfide + 2 5'-deoxyadenosine + 2 L-methionine + 2 reduced [2Fe-2S]-[ferredoxin]. It functions in the pathway protein modification; protein lipoylation via endogenous pathway; protein N(6)-(lipoyl)lysine from octanoyl-[acyl-carrier-protein]: step 2/2. Catalyzes the radical-mediated insertion of two sulfur atoms into the C-6 and C-8 positions of the octanoyl moiety bound to the lipoyl domains of lipoate-dependent enzymes, thereby converting the octanoylated domains into lipoylated derivatives. The polypeptide is Lipoyl synthase (Rickettsia prowazekii (strain Madrid E)).